Consider the following 508-residue polypeptide: Putative adenosylhomocysteinase 3 (508 aa).

A Phosphoserine modification is found at serine 4. The disordered stretch occupies residues 24-81; that stretch reads DQKQEFNKRPTKIGRRSLSRSISQSSTDSYSSAASYTDSSDDETSPRDKQQKNSKGSS. Over residues 32–41 the composition is skewed to basic residues; sequence RPTKIGRRSL. Low complexity predominate over residues 42–61; sequence SRSISQSSTDSYSSAASYTD. Phosphoserine is present on residues serine 46, serine 49, serine 52, and serine 55. Substrate is bound by residues threonine 133, aspartate 207, and glutamate 232. 233-235 serves as a coordination point for NAD(+); that stretch reads SVT. Substrate is bound by residues lysine 262 and aspartate 266. NAD(+)-binding positions include asparagine 267, 298-303, glutamate 319, asparagine 354, 375-377, and asparagine 422; these read GEVGKG and IGH.

It belongs to the adenosylhomocysteinase family. Homotetramer. Forms heteromultimers with AHCYL1 (via the C-terminal region). Interacts with ITPR1; with lower affinity than AHCYL1 and maybe via ITPR1. Interacts with SLC4A4. Interacts with ZCCHC4. The cofactor is NAD(+).

Its subcellular location is the cytoplasm. The protein resides in the microsome. It catalyses the reaction S-adenosyl-L-homocysteine + H2O = L-homocysteine + adenosine. The protein operates within amino-acid biosynthesis; L-homocysteine biosynthesis; L-homocysteine from S-adenosyl-L-homocysteine: step 1/1. Its function is as follows. May regulate the electrogenic sodium/bicarbonate cotransporter SLC4A4 activity and Mg(2+)-sensitivity. On the contrary of its homolog AHCYL1, does not regulate ITPR1 sensitivity to inositol 1,4,5-trisphosphate. This chain is Putative adenosylhomocysteinase 3 (AHCYL2), found in Pongo abelii (Sumatran orangutan).